The sequence spans 485 residues: ATP synthase subunit beta (485 aa).

The segment covering 1 to 11 (MPATETADKNT) has biased composition (basic and acidic residues). A disordered region spans residues 1–20 (MPATETADKNTKSANSDTSG). 170-177 (GGAGVGKT) provides a ligand contact to ATP.

The protein belongs to the ATPase alpha/beta chains family. In terms of assembly, F-type ATPases have 2 components, CF(1) - the catalytic core - and CF(0) - the membrane proton channel. CF(1) has five subunits: alpha(3), beta(3), gamma(1), delta(1), epsilon(1). CF(0) has three main subunits: a(1), b(2) and c(9-12). The alpha and beta chains form an alternating ring which encloses part of the gamma chain. CF(1) is attached to CF(0) by a central stalk formed by the gamma and epsilon chains, while a peripheral stalk is formed by the delta and b chains.

The protein resides in the cell membrane. It catalyses the reaction ATP + H2O + 4 H(+)(in) = ADP + phosphate + 5 H(+)(out). Its function is as follows. Produces ATP from ADP in the presence of a proton gradient across the membrane. The catalytic sites are hosted primarily by the beta subunits. The protein is ATP synthase subunit beta of Mycolicibacterium paratuberculosis (strain ATCC BAA-968 / K-10) (Mycobacterium paratuberculosis).